Here is a 751-residue protein sequence, read N- to C-terminus: Oxysterol-binding protein-related protein 11 (751 aa).

Residue methionine 1 is modified to N-acetylmethionine. The interval 1–57 (MQGGEPASVMKVSESEGKLEGLATAVTPNKNSGNSSCGGAISSSSSNSSRGGSAKGW) is disordered. Residue serine 15 is modified to Phosphoserine. At threonine 27 the chain carries Phosphothreonine. Over residues 31-52 (NSGNSSCGGAISSSSSNSSRGG) the composition is skewed to low complexity. Residues 63–160 (MESVNGYLMK…WVSRLQICTQ (98 aa)) form the PH domain. Phosphoserine occurs at positions 177, 179, 182, 186, 189, and 194. 2 disordered regions span residues 475 to 497 (SGVS…EEAP) and 694 to 716 (EIDK…ERLR).

It belongs to the OSBP family. In terms of assembly, heterodimer with OSBPL9.

Its subcellular location is the late endosome membrane. The protein resides in the golgi apparatus. It is found in the trans-Golgi network membrane. It carries out the reaction a 1,2-diacyl-sn-glycero-3-phospho-(1D-myo-inositol 4-phosphate)(out) + a 1,2-diacyl-sn-glycero-3-phospho-L-serine(in) = a 1,2-diacyl-sn-glycero-3-phospho-(1D-myo-inositol 4-phosphate)(in) + a 1,2-diacyl-sn-glycero-3-phospho-L-serine(out). In terms of biological role, plays a role in regulating ADIPOQ and FABP4 levels in differentiating adipocytes and is also involved in regulation of adipocyte triglyceride storage. Weakly binds 25-hydroxycholesterol. Interacts with OSBPL9 to function as lipid transfer proteins. Together they form a heterodimer that localizes at the ER-trans-Golgi membrane contact sites, and exchanges phosphatidylserine (1,2-diacyl-sn-glycero-3-phospho-L-serine, PS) for phosphatidylinositol-4-phosphate (1,2-diacyl-sn-glycero-3-phospho-(1D-myo-inositol 4-phosphate), PI(4)P) between the two organelles, a step that is critical for sphingomyelin synthesis in the Golgi complex. The sequence is that of Oxysterol-binding protein-related protein 11 (Osbpl11) from Mus musculus (Mouse).